A 360-amino-acid polypeptide reads, in one-letter code: Malate dehydrogenase (360 aa).

Belongs to the LDH2/MDH2 oxidoreductase family. In terms of assembly, homodimer.

It localises to the cytoplasm. It catalyses the reaction (S)-malate + NAD(+) = oxaloacetate + NADH + H(+). The sequence is that of Malate dehydrogenase (mdh) from Pyrococcus horikoshii (strain ATCC 700860 / DSM 12428 / JCM 9974 / NBRC 100139 / OT-3).